Reading from the N-terminus, the 196-residue chain is Macrophage infectivity potentiator (196 aa).

The signal sequence occupies residues 1–29 (MHRENYFSKIAFCLLGVLFLSCITSVQTV). A PPIase FKBP-type domain is found at 85 to 171 (DDKCEVHYTG…EFDVELISIK (87 aa)).

This sequence belongs to the FKBP-type PPIase family.

The protein localises to the secreted. It is found in the extracellular space. It carries out the reaction [protein]-peptidylproline (omega=180) = [protein]-peptidylproline (omega=0). Its activity is regulated as follows. Strongly inhibited by FK506 and L-685,818. Essential virulence factor associated with macrophage infectivity. Exhibits PPIase activity. The polypeptide is Macrophage infectivity potentiator (MIP) (Trypanosoma cruzi).